We begin with the raw amino-acid sequence, 410 residues long: Translation initiation factor 2 subunit gamma (410 aa).

Residues 6–203 form the tr-type G domain; it reads QSEVNIGMVG…AIQDFIPTPE (198 aa). A G1 region spans residues 15 to 22; that stretch reads GHVDHGKT. Mg(2+) contacts are provided by D18, T22, G43, and S45. Position 18–23 (18–23) interacts with GTP; it reads DHGKTS. The interval 43–47 is G2; the sequence is GISIR. Positions 58, 61, 73, and 76 each coordinate Zn(2+). Residues 90–93 form a G3 region; it reads DAPG. GTP is bound by residues 146 to 149 and 181 to 183; these read NKID and SAH. The segment at 146–149 is G4; that stretch reads NKID. The G5 stretch occupies residues 181 to 183; it reads SAH.

This sequence belongs to the TRAFAC class translation factor GTPase superfamily. Classic translation factor GTPase family. EIF2G subfamily. Heterotrimer composed of an alpha, a beta and a gamma chain. Mg(2+) is required as a cofactor.

It catalyses the reaction GTP + H2O = GDP + phosphate + H(+). Functionally, eIF-2 functions in the early steps of protein synthesis by forming a ternary complex with GTP and initiator tRNA. The polypeptide is Translation initiation factor 2 subunit gamma (Methanococcus maripaludis (strain DSM 14266 / JCM 13030 / NBRC 101832 / S2 / LL)).